Consider the following 103-residue polypeptide: Co-chaperonin GroES (103 aa).

It belongs to the GroES chaperonin family. In terms of assembly, heptamer of 7 subunits arranged in a ring. Interacts with the chaperonin GroEL.

The protein resides in the cytoplasm. Together with the chaperonin GroEL, plays an essential role in assisting protein folding. The GroEL-GroES system forms a nano-cage that allows encapsulation of the non-native substrate proteins and provides a physical environment optimized to promote and accelerate protein folding. GroES binds to the apical surface of the GroEL ring, thereby capping the opening of the GroEL channel. The sequence is that of Co-chaperonin GroES from Parasynechococcus marenigrum (strain WH8102).